Here is a 410-residue protein sequence, read N- to C-terminus: Multidrug resistance protein MdtA (410 aa).

The first 21 residues, 1–21 (MNNRYPVMKKGLIVLVVIAVA), serve as a signal peptide directing secretion. Residues 36-56 (SDGDLSGQSAHGKRGNGAHKP) form a disordered region.

The protein belongs to the membrane fusion protein (MFP) (TC 8.A.1) family. As to quaternary structure, part of a tripartite efflux system composed of MdtA, MdtB and MdtC.

It localises to the cell inner membrane. This chain is Multidrug resistance protein MdtA, found in Pantoea ananatis (strain AJ13355).